Consider the following 82-residue polypeptide: Delta-actitoxin-Aeq2b 1 (82 aa).

Residues 1-19 (MNRLMILVFAAVILALASA) form the signal peptide. Positions 20–26 (DEDVDIA) are excised as a propeptide. 3 disulfide bridges follow: C32–C79, C34–C69, and C62–C80.

It belongs to the sea anemone sodium channel inhibitory toxin family. Type I subfamily.

It is found in the secreted. The protein resides in the nematocyst. Its function is as follows. Binds specifically to voltage-gated sodium channels (Nav), thereby delaying their inactivation during signal transduction. Causes death to crabs. This is Delta-actitoxin-Aeq2b 1 from Actinia equina (Beadlet anemone).